Consider the following 365-residue polypeptide: Peptide chain release factor 2 (365 aa).

N5-methylglutamine is present on Gln-252.

The protein belongs to the prokaryotic/mitochondrial release factor family. In terms of processing, methylated by PrmC. Methylation increases the termination efficiency of RF2.

Its subcellular location is the cytoplasm. Functionally, peptide chain release factor 2 directs the termination of translation in response to the peptide chain termination codons UGA and UAA. In Colwellia psychrerythraea (strain 34H / ATCC BAA-681) (Vibrio psychroerythus), this protein is Peptide chain release factor 2.